Consider the following 763-residue polypeptide: DEK domain-containing chromatin-associated protein 3 (763 aa).

Disordered stretches follow at residues 1–324 and 458–681; these read MGED…RERK and TGDV…SDKV. The segment covering 11-20 has biased composition (polar residues); it reads PTANKTTSLE. 4 stretches are compositionally biased toward basic and acidic residues: residues 32-44, 72-97, 124-172, and 180-242; these read AGGKETQELAKDE, SEVKKNEDNAETQKMEEKVEVTKDEG, TVMK…KANG, and DIKE…KVED. Positions 60 to 96 form a coiled coil; it reads KDDEKAETEDKESEVKKNEDNAETQKMEEKVEVTKDE. Residues 214–286 are a coiled coil; the sequence is GKEKEDKEEN…KEESKGSKKR (73 aa). The segment covering 243–252 has biased composition (acidic residues); it reads EKEGSEDEND. Over residues 253–264 the composition is skewed to basic and acidic residues; sequence NEKVESKDAKED. The span at 265 to 277 shows a compositional bias: acidic residues; the sequence is EKEETNDDKEDEK. The Nuclear localization signal 1 signature appears at 284-291; it reads KKRGKGTS. Positions 295–311 are enriched in basic and acidic residues; the sequence is KVREKNKTEEVKKDAEP. The span at 475–484 shows a compositional bias: basic residues; sequence KGAKRKRTPK. The Nuclear localization signal 2 motif lies at 483-490; sequence PKKTSPTA. The segment covering 485–496 has biased composition (low complexity); it reads KTSPTAGSSSSK. Positions 513 to 551 form a coiled coil; it reads KKSLAHSDDESEEEKEEEEKQEEEKAEEKEEKKEEENEN. The span at 521 to 533 shows a compositional bias: acidic residues; it reads DESEEEKEEEEKQ. Positions 534–547 are enriched in basic and acidic residues; sequence EEEKAEEKEEKKEE. A compositionally biased stretch (acidic residues) spans 557 to 578; the sequence is SEDEAPQPSESEEKDESEEHSE. 2 stretches are compositionally biased toward low complexity: residues 606–615 and 650–660; these read AVVAAKSSPP and PIKASPAPSKS. The span at 661-681 shows a compositional bias: basic and acidic residues; that stretch reads ASKEKPVKRAGKGKDKPSDKV. A DEK-C domain is found at 676 to 731; it reads KPSDKVLKNAIVEILKRVDFSTATFTDILKELAKEFTEDLTPRKSSIKMIIQEELT. 2 DNA-binding regions span residues 694 to 708 and 723 to 727; these read DFSTATFTDILKELA and KMIIQ. The stretch at 723-753 forms a coiled coil; the sequence is KMIIQEELTKLADEEEEEEKKEEDSEKEEAG. The interval 730–763 is disordered; the sequence is LTKLADEEEEEEKKEEDSEKEEAGGSGGGEEVKA. The segment covering 753 to 763 has biased composition (gly residues); it reads GGSGGGEEVKA.

As to quaternary structure, found in a mRNA splicing-dependent exon junction complex (EJC). Binds specifically histones H3 and H4. Interacts with TOP1A, SCC3, At1g61730, At1g20940, At1g13930, DEK4, HDT1, NIT1, SHL, CYP19-1, GEBPL, HSP70-3, PDP2, PDP3, KIN2, RPL11A and PDS5A. In terms of tissue distribution, highly expressed in young seedlings.

The protein localises to the nucleus. The protein resides in the nucleolus. In terms of biological role, chromatin-associated protein which contributes to the modulation of chromatin structure (such as super-helical structure of DNA) and function. Binds to chromatin of protein-coding genes throughout the genome to regulate nucleosome occupancy and chromatin accessibility, and to modulate the expression of target genes. Negative regulator of stress tolerance (e.g. high salt). The sequence is that of DEK domain-containing chromatin-associated protein 3 from Arabidopsis thaliana (Mouse-ear cress).